A 259-amino-acid chain; its full sequence is Deoxyribose-phosphate aldolase (259 aa).

Catalysis depends on D102, which acts as the Proton donor/acceptor. K167 serves as the catalytic Schiff-base intermediate with acetaldehyde. The active-site Proton donor/acceptor is K201.

This sequence belongs to the DeoC/FbaB aldolase family. DeoC type 2 subfamily.

The protein resides in the cytoplasm. The catalysed reaction is 2-deoxy-D-ribose 5-phosphate = D-glyceraldehyde 3-phosphate + acetaldehyde. It participates in carbohydrate degradation; 2-deoxy-D-ribose 1-phosphate degradation; D-glyceraldehyde 3-phosphate and acetaldehyde from 2-deoxy-alpha-D-ribose 1-phosphate: step 2/2. Catalyzes a reversible aldol reaction between acetaldehyde and D-glyceraldehyde 3-phosphate to generate 2-deoxy-D-ribose 5-phosphate. This Serratia proteamaculans (strain 568) protein is Deoxyribose-phosphate aldolase.